A 524-amino-acid polypeptide reads, in one-letter code: Ribosomal protein uS12 methylthiotransferase RimO (524 aa).

Polar residues predominate over residues Asn20–Ala31. Positions Asn20–Leu59 are disordered. Residues Glu48–Ser58 show a composition bias toward low complexity. The MTTase N-terminal domain maps to Pro67–Pro177. 6 residues coordinate [4Fe-4S] cluster: Cys76, Cys112, Cys141, Cys216, Cys220, and Cys223. The 242-residue stretch at Leu202–Gln443 folds into the Radical SAM core domain. One can recognise a TRAM domain in the interval Gln446–Ala519.

This sequence belongs to the methylthiotransferase family. RimO subfamily. It depends on [4Fe-4S] cluster as a cofactor.

It is found in the cytoplasm. It catalyses the reaction L-aspartate(89)-[ribosomal protein uS12]-hydrogen + (sulfur carrier)-SH + AH2 + 2 S-adenosyl-L-methionine = 3-methylsulfanyl-L-aspartate(89)-[ribosomal protein uS12]-hydrogen + (sulfur carrier)-H + 5'-deoxyadenosine + L-methionine + A + S-adenosyl-L-homocysteine + 2 H(+). In terms of biological role, catalyzes the methylthiolation of an aspartic acid residue of ribosomal protein uS12. The polypeptide is Ribosomal protein uS12 methylthiotransferase RimO (Psychrobacter sp. (strain PRwf-1)).